The sequence spans 341 residues: Ribosomal RNA small subunit methyltransferase H (341 aa).

Residues 47 to 49 (GGY), Asp64, Phe91, Asp109, and Gln116 each bind S-adenosyl-L-methionine.

Belongs to the methyltransferase superfamily. RsmH family.

It is found in the cytoplasm. It carries out the reaction cytidine(1402) in 16S rRNA + S-adenosyl-L-methionine = N(4)-methylcytidine(1402) in 16S rRNA + S-adenosyl-L-homocysteine + H(+). Specifically methylates the N4 position of cytidine in position 1402 (C1402) of 16S rRNA. The polypeptide is Ribosomal RNA small subunit methyltransferase H (Rhizobium leguminosarum bv. trifolii (strain WSM2304)).